The sequence spans 381 residues: E3 ubiquitin-protein ligase KCMF1 (381 aa).

Position 2 is an N-acetylserine (S2). The residue at position 2 (S2) is a Phosphoserine. Residues 4–60 (HEGVSCDACLKGNFRGRRYKCLICYDYDLCASCYESGATTTRHTTDHPMQCILTRVD) form a ZZ-type zinc finger. 8 residues coordinate Zn(2+): C9, C12, C24, C27, C33, C36, H46, and H50. The C2H2-type zinc finger occupies 78–101 (FTCPYCGKMGYTETSLQEHVTSEH). A disordered region spans residues 154–194 (MFHPGRGLGGPRARRSNMHFTSSSTGGLSSSQSSYSPSSRE). 3 positions are modified to phosphoserine: S169, S189, and S212. Over residues 175–192 (SSSTGGLSSSQSSYSPSS) the composition is skewed to low complexity. Residues 224 to 259 (ASQLQQLQMQLQLERQHAQAARQQLETARNASRRTN) adopt a coiled-coil conformation. Phosphoserine is present on residues S335 and S336.

It belongs to the KCMF1 family. In terms of assembly, component of the SIFI complex, composed of KCMF1, UBR4 and calmodulin (CALM1, CALM2 or CALM3). Testis, liver, kidney, heart and skeletal muscle.

It is found in the cytoplasm. It localises to the late endosome. The protein resides in the lysosome. It carries out the reaction S-ubiquitinyl-[E2 ubiquitin-conjugating enzyme]-L-cysteine + [acceptor protein]-L-lysine = [E2 ubiquitin-conjugating enzyme]-L-cysteine + N(6)-ubiquitinyl-[acceptor protein]-L-lysine.. Its pathway is protein modification; protein ubiquitination. E3 ubiquitin-protein ligase which accepts ubiquitin from an E2 ubiquitin-conjugating enzyme and then transfers it to targeted substrates, promoting their degradation by the proteasome. Together with UBR4, component of the N-end rule pathway: ubiquitinates proteins bearing specific N-terminal residues that are destabilizing according to the N-end rule, leading to their degradation. Does not ubiquitinate proteins that are acetylated at the N-terminus. Together with UBR4, part of a protein quality control pathway that catalyzes ubiquitination and degradation of proteins that have been oxidized in response to reactive oxygen species (ROS): recognizes proteins with an Arg-CysO3(H) degron at the N-terminus, and mediates assembly of heterotypic 'Lys-63'-/'Lys-27'-linked branched ubiquitin chains on oxidized proteins, leading to their degradation by autophagy. Catalytic component of the SIFI complex, a multiprotein complex required to inhibit the mitochondrial stress response after a specific stress event has been resolved: ubiquitinates and degrades (1) components of the HRI-mediated signaling of the integrated stress response, such as DELE1 and EIF2AK1/HRI, as well as (2) unimported mitochondrial precursors. Within the SIFI complex, UBR4 initiates ubiquitin chain that are further elongated or branched by KCMF1. The chain is E3 ubiquitin-protein ligase KCMF1 from Mus musculus (Mouse).